The primary structure comprises 238 residues: MTPDEFLSALTEFDIQLSDKQIKQFERYFELLVEWNEKINLTAITEKNEVYLKHFYDSIAPILYGLITDQPVSILDIGAGAGFPSLPMKIIFPELKVTIIDSLNKRINFLSLLTEELGLENVTLLHGRAEDFGQDANYRGTFDFVTARAVARLSVLTEFTIPFLKKNGILLSLKAAQFEEELNDAKKAIATLGGKFIKEVAYELPNGDERHIALIEKKKETPKKYPRKAGTPAKNPIK.

S-adenosyl-L-methionine-binding positions include glycine 78, phenylalanine 83, 129–130, and arginine 148; that span reads AE. Residues 216–238 form a disordered region; sequence EKKKETPKKYPRKAGTPAKNPIK.

The protein belongs to the methyltransferase superfamily. RNA methyltransferase RsmG family.

It is found in the cytoplasm. Specifically methylates the N7 position of a guanine in 16S rRNA. In Lactococcus lactis subsp. lactis (strain IL1403) (Streptococcus lactis), this protein is Ribosomal RNA small subunit methyltransferase G.